Reading from the N-terminus, the 307-residue chain is UDP-3-O-acyl-N-acetylglucosamine deacetylase (307 aa).

Residues His78, His241, and Asp245 each contribute to the Zn(2+) site. His268 acts as the Proton donor in catalysis.

Belongs to the LpxC family. Zn(2+) is required as a cofactor.

The enzyme catalyses a UDP-3-O-[(3R)-3-hydroxyacyl]-N-acetyl-alpha-D-glucosamine + H2O = a UDP-3-O-[(3R)-3-hydroxyacyl]-alpha-D-glucosamine + acetate. It functions in the pathway glycolipid biosynthesis; lipid IV(A) biosynthesis; lipid IV(A) from (3R)-3-hydroxytetradecanoyl-[acyl-carrier-protein] and UDP-N-acetyl-alpha-D-glucosamine: step 2/6. Functionally, catalyzes the hydrolysis of UDP-3-O-myristoyl-N-acetylglucosamine to form UDP-3-O-myristoylglucosamine and acetate, the committed step in lipid A biosynthesis. The chain is UDP-3-O-acyl-N-acetylglucosamine deacetylase from Acidovorax ebreus (strain TPSY) (Diaphorobacter sp. (strain TPSY)).